Here is an 862-residue protein sequence, read N- to C-terminus: Axin-1 (862 aa).

Residues 1-78 are disordered; it reads MNIQEQGFPL…GYEPEGSASP (78 aa). A Tankyrase-binding motif motif is present at residues 20 to 29; the sequence is APRPPVPGEE. Residues Ser-75 and Ser-77 each carry the phosphoserine; by CK1 modification. Residues 88 to 211 enclose the RGS domain; sequence SLHSLLDDQD…LKSDIYLEYT (124 aa). The segment at 209–338 is interaction with TP53; the sequence is EYTRTGSESP…DADTLSLTDS (130 aa). Disordered stretches follow at residues 215-289 and 316-344; these read SESP…YSEG and TSAN…DGIP. Ser-217 carries the post-translational modification Phosphoserine; by CK1. Residues 242 to 258 are compositionally biased toward acidic residues; the sequence is NEDEEWKCDQDMDEDDG. Residues 325–339 show a composition bias toward low complexity; the sequence is SLSSDADTLSLTDSS. The interaction with GSK3B stretch occupies residues 348–433; that stretch reads IRKQHRREMQ…DGDPSSGPPG (86 aa). The tract at residues 353 to 411 is interaction with SIAH1 and SIAH2; the sequence is RREMQESVQVNGRVPLPHIPRTYRVPKEVRVEPQKFAEELIHRLEAVQRTREAEEKLEE. Positions 413 to 441 are disordered; sequence LKRVRMEEEGEDGDPSSGPPGPCHKLPPA. Residues 429-441 show a composition bias toward pro residues; sequence SGPPGPCHKLPPA. The interval 434–502 is interaction with CTNNB1; sequence PCHKLPPAPA…SPDSGHVAKM (69 aa). Position 469 is a phosphoserine; by CK1 (Ser-469). The tract at residues 480 to 500 is disordered; the sequence is RTPGRQSPGPGHRSPDSGHVA. Thr-481 is modified (phosphothreonine; by GSK3-beta). Residues Ser-486, Ser-493, and Ser-511 each carry the phosphoserine modification. The interaction with RNF111 stretch occupies residues 507–757; the sequence is GGAASGHGKH…PVLHVVPAVS (251 aa). Over residues 531 to 544 the composition is skewed to basic residues; that stretch reads HHRHVHHHVHHSTA. Disordered stretches follow at residues 531-629 and 641-679; these read HHRH…AEKN and KEIS…GPQL. Residues 545–556 are compositionally biased toward basic and acidic residues; that stretch reads RPKEQVEAEATR. The interaction with PPP2CA stretch occupies residues 575–789; the sequence is SRGYSESVGA…CDSIVVAYYF (215 aa). At Ser-581 the chain carries Phosphoserine. The interval 677-752 is interaction with HIPK2; the sequence is PQLRTSVQPS…RPACAPVLHV (76 aa). The DIX domain occupies 780-862; that stretch reads CDSIVVAYYF…KIIGKVEKVD (83 aa). Residues Lys-857 and Lys-860 each participate in a glycyl lysine isopeptide (Lys-Gly) (interchain with G-Cter in SUMO) cross-link.

Homodimer. Interacts with ZBED3; the interaction is direct, enhanced by protein kinase GSK3B and casein kinase CSNK1E activities and decreases GSK3B-induced beta-catenin serine and threonine phosphorylations. Component of the beta-catenin destruction complex, containing at least, CTNNB1, an axin and GSK3B, that regulates CTNNB1 protein levels through phosphorylation and ubiquitination. Interacts with CTNNB1 (via the armadillo repeats 2-7). Interacts with GSK3B; the interaction hyperphosphorylates CTNNB1 leading to its ubiquitination and destruction. Component of the AXIN1-HIPK2-TP53 complex. Interacts directly in the complex with TP53 and HIPK2. Interacts with DAXX; the interaction stimulates the interaction of DAXX with TP53, stimulates 'Ser-46' phosphorylation of TP53 and induces cell death on UV irradiation. Also binds APC, SMAD6, SMAD7 and RNF111. Interacts with DIXDC1; prevents interaction with MAP3K1. Interacts with MAP3K4. Interacts with ANKRD6 and AIDA. Interacts with MDFI; the interaction decreases AXIN1-mediated JUN N-terminal kinase (JNK) activation. Interacts with MDFIC; the interaction inhibits beta-cateninin-mediated signaling and AXIN1-mediated JUN N-terminal kinase (JNK) activation. Interacts with LRP5 (via its phosphorylated PPPSP motifs); the interaction is stimulated by WNT1 and GSK3B and activates beta-catenin signaling. Interacts (via the C-terminal) with PPP1CA; the interaction dephosphorylates AXIN1 and regulates interaction with GSK3B. Interacts with PPP2CA; the interaction dephosphorylates AXIN1. Interacts with MACF1. Found in a complex composed of MACF1, APC, AXIN1, CTNNB1 and GSK3B. Interacts with TNKS. Interacts with DAB2; the interaction is mutually exclusive with the AXIN1:PPP1CA interaction. Interacts with WDR26. Interacts with GID8. Interacts with SIAH1 and SIAH2; both probably catalyze AXIN1 ubiquitination and subsequent proteasome-mediated ubiquitin-dependent degradation. Interaction with GSK3B and AXIN1 is competitive. Post-translationally, phosphorylation and dephosphorylation of AXIN1 regulates assembly and function of the beta-catenin complex. Phosphorylated by CK1 and GSK3B. Dephosphorylated by PPP1CA and PPP2CA. Phosphorylation by CK1 enhances binding of GSK3B to AXIN1. In terms of processing, ADP-ribosylated by tankyrase TNKS and TNKS2. Poly-ADP-ribosylated protein is recognized by RNF146, followed by ubiquitination at 'Lys-48' and subsequent activation of the Wnt signaling pathway. Ubiquitinated by RNF146 when poly-ADP-ribosylated, leading to its degradation and subsequent activation of the Wnt signaling pathway. Sumoylation at Lys-857 and Lys-860 prevents ubiquitination and degradation. Sumoylation is required for AXIN1-mediated JNK activation. Deubiquitinated by USP34, deubiquitinated downstream of beta-catenin stabilization step: deubiquitination is important for nuclear accumulation during Wnt signaling to positively regulate beta-catenin (CTNBB1)-mediated transcription. Ubiquitination by SIAH1 and SIAH2 induces its proteasomal degradation as part of the activation of the Wnt signaling pathway. In terms of tissue distribution, ubiquitously expressed.

It is found in the cytoplasm. The protein localises to the nucleus. It localises to the membrane. The protein resides in the cell membrane. In terms of biological role, component of the beta-catenin destruction complex required for regulating CTNNB1 levels through phosphorylation and ubiquitination, and modulating Wnt-signaling. Controls dorsoventral patterning via two opposing effects; down-regulates CTNNB1 to inhibit the Wnt signaling pathway and ventralize embryos, but also dorsalizes embryos by activating a Wnt-independent JNK signaling pathway. In Wnt signaling, probably facilitates the phosphorylation of CTNNB1 and APC by GSK3B. Likely to function as a tumor suppressor. Enhances TGF-beta signaling by recruiting the RNF111 E3 ubiquitin ligase and promoting the degradation of inhibitory SMAD7. Also a component of the AXIN1-HIPK2-TP53 complex which controls cell growth, apoptosis and development. Facilitates the phosphorylation of TP53 by HIPK2 upon ultraviolet irradiation. The protein is Axin-1 (AXIN1) of Homo sapiens (Human).